Here is a 237-residue protein sequence, read N- to C-terminus: Uridylate kinase (237 aa).

9–12 (KLSG) is a binding site for ATP. Gly-51 lines the UMP pocket. Gly-52 and Arg-56 together coordinate ATP. Residues Asp-71 and 132–139 (CGNPFFTT) contribute to the UMP site. Residues Thr-159, Tyr-165, and Asp-168 each contribute to the ATP site.

It belongs to the UMP kinase family. Homohexamer.

Its subcellular location is the cytoplasm. The enzyme catalyses UMP + ATP = UDP + ADP. It participates in pyrimidine metabolism; CTP biosynthesis via de novo pathway; UDP from UMP (UMPK route): step 1/1. With respect to regulation, inhibited by UTP. Functionally, catalyzes the reversible phosphorylation of UMP to UDP. This Prochlorococcus marinus (strain MIT 9303) protein is Uridylate kinase.